A 541-amino-acid chain; its full sequence is Probable malate:quinone oxidoreductase (541 aa).

The tract at residues 520–541 (AKPAAGAAQQAKPAKATADIAL) is disordered.

The protein belongs to the MQO family. The cofactor is FAD.

It catalyses the reaction (S)-malate + a quinone = a quinol + oxaloacetate. It participates in carbohydrate metabolism; tricarboxylic acid cycle; oxaloacetate from (S)-malate (quinone route): step 1/1. This chain is Probable malate:quinone oxidoreductase, found in Ralstonia nicotianae (strain ATCC BAA-1114 / GMI1000) (Ralstonia solanacearum).